A 393-amino-acid chain; its full sequence is Glutamate 5-kinase (393 aa).

ATP is bound at residue Lys17. Substrate is bound by residues Ser57, Asp144, and Asn156. Position 176–177 (176–177 (SD)) interacts with ATP. A PUA domain is found at 282–359 (AGSIAIDAGA…AEIAAILGYA (78 aa)). The interval 374-393 (APSGARSEEGGNEKKGKLHA) is disordered. A compositionally biased stretch (basic and acidic residues) spans 379 to 393 (RSEEGGNEKKGKLHA).

The protein belongs to the glutamate 5-kinase family.

It localises to the cytoplasm. It carries out the reaction L-glutamate + ATP = L-glutamyl 5-phosphate + ADP. Its pathway is amino-acid biosynthesis; L-proline biosynthesis; L-glutamate 5-semialdehyde from L-glutamate: step 1/2. Functionally, catalyzes the transfer of a phosphate group to glutamate to form L-glutamate 5-phosphate. The chain is Glutamate 5-kinase from Sinorhizobium fredii (strain NBRC 101917 / NGR234).